Here is a 625-residue protein sequence, read N- to C-terminus: Probable potassium transport system protein Kup (625 aa).

A run of 12 helical transmembrane segments spans residues 13-33, 53-73, 103-123, 141-161, 172-192, 206-226, 250-270, 282-302, 340-360, 369-389, 400-420, and 422-442; these read TALA…LYAL, ILSI…VAIV, IYMI…GIIT, VFDP…FLVQ, FGPI…HSVI, AIQF…AVVL, WFFV…ALLL, LLVP…ATVI, IYVP…ILIF, AYGL…AVFI, VLLL…ATSL, and ILSG…ILMT.

Belongs to the HAK/KUP transporter (TC 2.A.72) family.

The protein localises to the cell inner membrane. The catalysed reaction is K(+)(in) + H(+)(in) = K(+)(out) + H(+)(out). In terms of biological role, transport of potassium into the cell. Likely operates as a K(+):H(+) symporter. This is Probable potassium transport system protein Kup from Acinetobacter baumannii (strain AYE).